The following is a 314-amino-acid chain: 2,3-dihydroxyphenylpropionate/2,3-dihydroxicinnamic acid 1,2-dioxygenase (314 aa).

The active-site Proton donor is His115. His179 acts as the Proton acceptor in catalysis.

The protein belongs to the LigB/MhpB extradiol dioxygenase family. As to quaternary structure, homotetramer. Requires Fe(2+) as cofactor.

The catalysed reaction is 3-(2,3-dihydroxyphenyl)propanoate + O2 = (2Z,4E)-2-hydroxy-6-oxonona-2,4-dienedioate + H(+). It catalyses the reaction (2E)-3-(2,3-dihydroxyphenyl)prop-2-enoate + O2 = (2Z,4E,7E)-2-hydroxy-6-oxonona-2,4,7-trienedioate + H(+). It functions in the pathway aromatic compound metabolism; 3-phenylpropanoate degradation. In terms of biological role, catalyzes the non-heme iron(II)-dependent oxidative cleavage of 2,3-dihydroxyphenylpropionic acid and 2,3-dihydroxicinnamic acid into 2-hydroxy-6-ketononadienedioate and 2-hydroxy-6-ketononatrienedioate, respectively. The polypeptide is 2,3-dihydroxyphenylpropionate/2,3-dihydroxicinnamic acid 1,2-dioxygenase (Klebsiella pneumoniae (strain 342)).